Reading from the N-terminus, the 172-residue chain is 3-hydroxydecanoyl-[acyl-carrier-protein] dehydratase (172 aa).

H71 is an active-site residue.

This sequence belongs to the thioester dehydratase family. FabA subfamily. Homodimer.

It is found in the cytoplasm. The enzyme catalyses a (3R)-hydroxyacyl-[ACP] = a (2E)-enoyl-[ACP] + H2O. The catalysed reaction is (3R)-hydroxydecanoyl-[ACP] = (2E)-decenoyl-[ACP] + H2O. It catalyses the reaction (2E)-decenoyl-[ACP] = (3Z)-decenoyl-[ACP]. It participates in lipid metabolism; fatty acid biosynthesis. Its function is as follows. Necessary for the introduction of cis unsaturation into fatty acids. Catalyzes the dehydration of (3R)-3-hydroxydecanoyl-ACP to E-(2)-decenoyl-ACP and then its isomerization to Z-(3)-decenoyl-ACP. Can catalyze the dehydratase reaction for beta-hydroxyacyl-ACPs with saturated chain lengths up to 16:0, being most active on intermediate chain length. In Aliivibrio fischeri (strain ATCC 700601 / ES114) (Vibrio fischeri), this protein is 3-hydroxydecanoyl-[acyl-carrier-protein] dehydratase.